A 305-amino-acid polypeptide reads, in one-letter code: tRNA pseudouridine synthase B (305 aa).

Residue aspartate 48 is the Nucleophile of the active site.

It belongs to the pseudouridine synthase TruB family. Type 1 subfamily.

The catalysed reaction is uridine(55) in tRNA = pseudouridine(55) in tRNA. Functionally, responsible for synthesis of pseudouridine from uracil-55 in the psi GC loop of transfer RNAs. The protein is tRNA pseudouridine synthase B of Pseudomonas syringae pv. syringae (strain B728a).